We begin with the raw amino-acid sequence, 303 residues long: Protoheme IX farnesyltransferase (303 aa).

The next 8 membrane-spanning stretches (helical) occupy residues 25–45, 54–74, 104–124, 125–145, 151–171, 179–199, 228–248, and 280–300; these read MGLV…AIVL, IPQI…ACAL, LLIL…ILNI, PSGV…SIWS, WNTV…WTAI, AIAL…ALAI, VWLI…PVFI, and FVYS…ISLI.

It belongs to the UbiA prenyltransferase family. Protoheme IX farnesyltransferase subfamily. As to quaternary structure, interacts with CtaA.

Its subcellular location is the cell membrane. It catalyses the reaction heme b + (2E,6E)-farnesyl diphosphate + H2O = Fe(II)-heme o + diphosphate. Its pathway is porphyrin-containing compound metabolism; heme O biosynthesis; heme O from protoheme: step 1/1. Converts heme B (protoheme IX) to heme O by substitution of the vinyl group on carbon 2 of heme B porphyrin ring with a hydroxyethyl farnesyl side group. The sequence is that of Protoheme IX farnesyltransferase from Staphylococcus carnosus (strain TM300).